The following is a 181-amino-acid chain: MQDQIRQEKIVGSRRFSNYFWASLLLVGGLMFLLAGISSYLKINLLPFANTTELVFIPQGIVMMFYGTLSFGLSIYIMATLFWDIGSGYNEYNKVENLVKVVRRGFPGKNREILLTYPLNNIRSIGIKISEGLNPQRIIYLCLKDERKIPLTPVQQPDSISDLEDQAADLAKFLDLKLENL.

The next 2 membrane-spanning stretches (helical) occupy residues 19–39 and 61–81; these read YFWA…GISS and IVMM…MATL.

Belongs to the Ycf4 family.

Its subcellular location is the plastid. It localises to the chloroplast thylakoid membrane. Functionally, seems to be required for the assembly of the photosystem I complex. This Thalassiosira pseudonana (Marine diatom) protein is Photosystem I assembly protein Ycf4.